An 874-amino-acid polypeptide reads, in one-letter code: Alanine--tRNA ligase (874 aa).

The Zn(2+) site is built by histidine 564, histidine 568, cysteine 665, and histidine 669.

Belongs to the class-II aminoacyl-tRNA synthetase family. It depends on Zn(2+) as a cofactor.

It localises to the cytoplasm. It carries out the reaction tRNA(Ala) + L-alanine + ATP = L-alanyl-tRNA(Ala) + AMP + diphosphate. In terms of biological role, catalyzes the attachment of alanine to tRNA(Ala) in a two-step reaction: alanine is first activated by ATP to form Ala-AMP and then transferred to the acceptor end of tRNA(Ala). Also edits incorrectly charged Ser-tRNA(Ala) and Gly-tRNA(Ala) via its editing domain. This is Alanine--tRNA ligase from Paraburkholderia phymatum (strain DSM 17167 / CIP 108236 / LMG 21445 / STM815) (Burkholderia phymatum).